The primary structure comprises 246 residues: 3-deoxy-manno-octulosonate cytidylyltransferase (246 aa).

This sequence belongs to the KdsB family.

Its subcellular location is the cytoplasm. It catalyses the reaction 3-deoxy-alpha-D-manno-oct-2-ulosonate + CTP = CMP-3-deoxy-beta-D-manno-octulosonate + diphosphate. It functions in the pathway nucleotide-sugar biosynthesis; CMP-3-deoxy-D-manno-octulosonate biosynthesis; CMP-3-deoxy-D-manno-octulosonate from 3-deoxy-D-manno-octulosonate and CTP: step 1/1. Its pathway is bacterial outer membrane biogenesis; lipopolysaccharide biosynthesis. In terms of biological role, activates KDO (a required 8-carbon sugar) for incorporation into bacterial lipopolysaccharide in Gram-negative bacteria. The polypeptide is 3-deoxy-manno-octulosonate cytidylyltransferase (Rickettsia felis (strain ATCC VR-1525 / URRWXCal2) (Rickettsia azadi)).